Here is a 518-residue protein sequence, read N- to C-terminus: Probable thiamine biosynthetic bifunctional enzyme (518 aa).

The interval 1–229 (MKRQIDYSLY…ATPPCFAQAR (229 aa)) is thiamine-phosphate synthase. 4-amino-2-methyl-5-(diphosphooxymethyl)pyrimidine-binding positions include 40-44 (QHREK) and N72. Mg(2+)-binding residues include D73 and D92. S111 is a 4-amino-2-methyl-5-(diphosphooxymethyl)pyrimidine binding site. 137–139 (TNT) is a 2-[(2R,5Z)-2-carboxy-4-methylthiazol-5(2H)-ylidene]ethyl phosphate binding site. K140 serves as a coordination point for 4-amino-2-methyl-5-(diphosphooxymethyl)pyrimidine. Residues G173 and 199-200 (VS) contribute to the 2-[(2R,5Z)-2-carboxy-4-methylthiazol-5(2H)-ylidene]ethyl phosphate site. The segment at 230-518 (SSLTTPKDLL…IERAKLEKAE (289 aa)) is hydroxyethylthiazole kinase. M281 is a 5-(2-hydroxyethyl)-4-methylthiazole binding site. 2 residues coordinate ATP: K355 and S403. A 5-(2-hydroxyethyl)-4-methylthiazole-binding site is contributed by A430. The Proton acceptor; for hydroxyethylthiazole kinase activity role is filled by C433.

It in the N-terminal section; belongs to the thiamine-phosphate synthase family. This sequence in the C-terminal section; belongs to the Thz kinase family. The cofactor is Mg(2+).

It carries out the reaction 2-[(2R,5Z)-2-carboxy-4-methylthiazol-5(2H)-ylidene]ethyl phosphate + 4-amino-2-methyl-5-(diphosphooxymethyl)pyrimidine + 2 H(+) = thiamine phosphate + CO2 + diphosphate. The catalysed reaction is 2-(2-carboxy-4-methylthiazol-5-yl)ethyl phosphate + 4-amino-2-methyl-5-(diphosphooxymethyl)pyrimidine + 2 H(+) = thiamine phosphate + CO2 + diphosphate. The enzyme catalyses 4-methyl-5-(2-phosphooxyethyl)-thiazole + 4-amino-2-methyl-5-(diphosphooxymethyl)pyrimidine + H(+) = thiamine phosphate + diphosphate. It catalyses the reaction 5-(2-hydroxyethyl)-4-methylthiazole + ATP = 4-methyl-5-(2-phosphooxyethyl)-thiazole + ADP + H(+). It functions in the pathway cofactor biosynthesis; thiamine diphosphate biosynthesis; 4-methyl-5-(2-phosphoethyl)-thiazole from 5-(2-hydroxyethyl)-4-methylthiazole: step 1/1. It participates in cofactor biosynthesis; thiamine diphosphate biosynthesis; thiamine phosphate from 4-amino-2-methyl-5-diphosphomethylpyrimidine and 4-methyl-5-(2-phosphoethyl)-thiazole: step 1/1. Functionally, condenses 4-methyl-5-(beta-hydroxyethyl)thiazole monophosphate (THZ-P) and 2-methyl-4-amino-5-hydroxymethyl pyrimidine pyrophosphate (HMP-PP) to form thiamine monophosphate (TMP). The sequence is that of Probable thiamine biosynthetic bifunctional enzyme (thi4) from Schizosaccharomyces pombe (strain 972 / ATCC 24843) (Fission yeast).